The following is a 275-amino-acid chain: 5'-nucleotidase SurE (275 aa).

A divalent metal cation is bound by residues aspartate 12, aspartate 13, serine 44, and asparagine 102.

This sequence belongs to the SurE nucleotidase family. The cofactor is a divalent metal cation.

It is found in the cytoplasm. It catalyses the reaction a ribonucleoside 5'-phosphate + H2O = a ribonucleoside + phosphate. Functionally, nucleotidase that shows phosphatase activity on nucleoside 5'-monophosphates. The sequence is that of 5'-nucleotidase SurE from Synechococcus sp. (strain RCC307).